Consider the following 294-residue polypeptide: NAD kinase (294 aa).

The active-site Proton acceptor is Asp-74. NAD(+)-binding positions include 74-75, Arg-79, 149-150, Asp-179, 190-195, and Ala-214; these read DG, NE, and TGYSLS.

It belongs to the NAD kinase family. Requires a divalent metal cation as cofactor.

It is found in the cytoplasm. It catalyses the reaction NAD(+) + ATP = ADP + NADP(+) + H(+). In terms of biological role, involved in the regulation of the intracellular balance of NAD and NADP, and is a key enzyme in the biosynthesis of NADP. Catalyzes specifically the phosphorylation on 2'-hydroxyl of the adenosine moiety of NAD to yield NADP. The protein is NAD kinase of Flavobacterium johnsoniae (strain ATCC 17061 / DSM 2064 / JCM 8514 / BCRC 14874 / CCUG 350202 / NBRC 14942 / NCIMB 11054 / UW101) (Cytophaga johnsonae).